Consider the following 157-residue polypeptide: UPF0251 protein CLM_1546 (157 aa).

It belongs to the UPF0251 family.

In Clostridium botulinum (strain Kyoto / Type A2), this protein is UPF0251 protein CLM_1546.